The primary structure comprises 554 residues: Muellerian-inhibiting factor (554 aa).

A signal peptide spans 1–24 (MQGPHLSPLVLLLATMGAVLQPEA). The propeptide occupies 25–446 (VENLATNTRG…GREGRGRTGR (422 aa)). Residues Asn-62, Asn-326, and Asn-410 are each glycosylated (N-linked (GlcNAc...) asparagine). Intrachain disulfides connect Cys-456-Cys-520, Cys-482-Cys-551, and Cys-486-Cys-553.

Belongs to the TGF-beta family. Homodimer; disulfide-linked. Preproprotein is proteolytically processed to generate N- and C-terminal cleavage products that homodimerize and associate to form a biologically active non-covalent complex. Binding of the non-covalent complex to AMHRII induces dissociation of the pro-region from the mature C-terminal dimer. The N-terminal portion of the protein, despite having no intrinsic activity, has the role of amplifying the activity of the C-terminus. In terms of tissue distribution, expressed in Sertoli cells of fetal testes, and in testes just after birth, but absent in adult testes. In female, AMH is expressed after birth in the granulosa cells of the follicle.

Its subcellular location is the secreted. Functionally, plays an important role in several reproductive functions, including Muellerian duct regression during male fetal sexua,l differentiation and in the adult plays a role in Leydig cell differentiation and function. In female acts as a negative regulator of the primordial to primary follicle transition and decreases FSH sensitivity of growing follicles. Binds to its sole type II receptor, AMHR2 that recruits type I receptors ACVR1 and BMPR1A which subsequently activates the Smad pathway. The protein is Muellerian-inhibiting factor (Amh) of Mus musculus (Mouse).